Reading from the N-terminus, the 683-residue chain is Elongation factor G 1 (683 aa).

In terms of domain architecture, tr-type G spans 3-278; that stretch reads DKMRNIGIMA…AVVDFLPAPN (276 aa). GTP contacts are provided by residues 12–19, 76–80, and 130–133; these read AHIDAGKT, DTPGH, and NKMD.

Belongs to the TRAFAC class translation factor GTPase superfamily. Classic translation factor GTPase family. EF-G/EF-2 subfamily.

It is found in the cytoplasm. Functionally, catalyzes the GTP-dependent ribosomal translocation step during translation elongation. During this step, the ribosome changes from the pre-translocational (PRE) to the post-translocational (POST) state as the newly formed A-site-bound peptidyl-tRNA and P-site-bound deacylated tRNA move to the P and E sites, respectively. Catalyzes the coordinated movement of the two tRNA molecules, the mRNA and conformational changes in the ribosome. The sequence is that of Elongation factor G 1 from Treponema denticola (strain ATCC 35405 / DSM 14222 / CIP 103919 / JCM 8153 / KCTC 15104).